Reading from the N-terminus, the 240-residue chain is 1-(5-phosphoribosyl)-5-[(5-phosphoribosylamino)methylideneamino] imidazole-4-carboxamide isomerase (240 aa).

The Proton acceptor role is filled by aspartate 8. Residue aspartate 129 is the Proton donor of the active site.

It belongs to the HisA/HisF family.

Its subcellular location is the cytoplasm. The catalysed reaction is 1-(5-phospho-beta-D-ribosyl)-5-[(5-phospho-beta-D-ribosylamino)methylideneamino]imidazole-4-carboxamide = 5-[(5-phospho-1-deoxy-D-ribulos-1-ylimino)methylamino]-1-(5-phospho-beta-D-ribosyl)imidazole-4-carboxamide. It functions in the pathway amino-acid biosynthesis; L-histidine biosynthesis; L-histidine from 5-phospho-alpha-D-ribose 1-diphosphate: step 4/9. This is 1-(5-phosphoribosyl)-5-[(5-phosphoribosylamino)methylideneamino] imidazole-4-carboxamide isomerase from Clostridioides difficile (strain 630) (Peptoclostridium difficile).